The following is a 221-amino-acid chain: NAD(P)H-hydrate epimerase (221 aa).

One can recognise a YjeF N-terminal domain in the interval 9–219 (MRELETAAVK…NIGLPKELLS (211 aa)). 60–64 (GNGGD) serves as a coordination point for (6S)-NADPHX. 2 residues coordinate K(+): Asn61 and Asp131. Residues 135–141 (GIGFKGE), Tyr146, and Asp164 contribute to the (6S)-NADPHX site. A K(+)-binding site is contributed by Ser167.

Belongs to the NnrE/AIBP family. It depends on K(+) as a cofactor.

It catalyses the reaction (6R)-NADHX = (6S)-NADHX. The enzyme catalyses (6R)-NADPHX = (6S)-NADPHX. Functionally, catalyzes the epimerization of the S- and R-forms of NAD(P)HX, a damaged form of NAD(P)H that is a result of enzymatic or heat-dependent hydration. This is a prerequisite for the S-specific NAD(P)H-hydrate dehydratase to allow the repair of both epimers of NAD(P)HX. This chain is NAD(P)H-hydrate epimerase, found in Elusimicrobium minutum (strain Pei191).